The primary structure comprises 241 residues: Oil body-associated protein 1B (241 aa).

Residues methionine 1–glycine 12 show a composition bias toward polar residues. The tract at residues methionine 1–threonine 22 is disordered.

This sequence belongs to the OBAP family.

This chain is Oil body-associated protein 1B, found in Arabidopsis thaliana (Mouse-ear cress).